Reading from the N-terminus, the 262-residue chain is Conserved oligomeric Golgi complex subunit 2 (262 aa).

In terms of assembly, component of the conserved oligomeric Golgi (COG or Sec34/Sec35) complex which consists of eight different proteins COG1-COG8. The COG complex interacts with the Rab GTPase YPT1, the Glogi SNAREs GOS1, SEC22, SED5, VTI1 and YKT6 and the COPI coatomer subunit gamma SEC21.

It localises to the golgi apparatus membrane. In terms of biological role, acts as a component of the peripheral membrane COG complex that is involved in intra-Golgi protein trafficking. COG is located at the cis-Golgi, and regulates tethering of retrograde intra-Golgi vesicles and possibly a number of other membrane trafficking events. COG2 is required for ER to Golgi vesicle docking. Not essential for viability. This Saccharomyces cerevisiae (strain ATCC 204508 / S288c) (Baker's yeast) protein is Conserved oligomeric Golgi complex subunit 2 (COG2).